A 377-amino-acid chain; its full sequence is Dehydrogenase/reductase SDR family member 13 (377 aa).

The signal sequence occupies residues 1–25; it reads MEALLLGVGLLLGAYVLVYYNLVKA. NAD(+) contacts are provided by serine 46 and isoleucine 48. Serine 170 serves as a coordination point for substrate. NAD(+) is bound by residues tyrosine 197, lysine 201, and serine 232. Catalysis depends on tyrosine 197, which acts as the Proton acceptor. The segment at 310–363 is disordered; it reads LAGLGPGEDAESDEDSQPEDPGTPSSPSSPHPEEPTVSELYPSPQSSTDRSTVT. Positions 317–327 are enriched in acidic residues; the sequence is EDAESDEDSQP. Residues 328–337 show a composition bias toward low complexity; sequence EDPGTPSSPS. Polar residues predominate over residues 352 to 363; it reads SPQSSTDRSTVT.

The protein belongs to the short-chain dehydrogenases/reductases (SDR) family.

The protein localises to the secreted. Putative oxidoreductase. The sequence is that of Dehydrogenase/reductase SDR family member 13 (DHRS13) from Bos taurus (Bovine).